Consider the following 1594-residue polypeptide: Transcription factor Gibbin (1594 aa).

Disordered regions lie at residues 19 to 111 (PDYL…RHWD), 149 to 241 (LRLS…LADA), 256 to 307 (QLLE…DPLG), and 367 to 464 (CSPH…RKGK). Residues 30-47 (GGPPTPRPLLPTRPPASP) show a composition bias toward pro residues. N6-acetyllysine is present on lysine 79. The span at 165 to 177 (SFFSSPSLANSIR) shows a compositional bias: polar residues. A compositionally biased stretch (basic and acidic residues) spans 178–193 (SPEERANPHTKSERPS). A compositionally biased stretch (acidic residues) spans 228-240 (PEPDGPDYSELAD). The residue at position 267 (serine 267) is a Phosphoserine. Over residues 272 to 303 (PQLLDPQPRFLDPQALEPLGEGLELPPLQPLA) the composition is skewed to low complexity. Positions 391–401 (ILCRRRKAGRG) are enriched in basic residues. Residues 395-407 (RRKAGRGRKADSG) constitute a DNA-binding region (a.T hook 1). Residues 427–447 (EPPPLPPPPPPTLSGPGPVPE) are compositionally biased toward pro residues. A DNA-binding region (a.T hook 2) is located at residues 541-553 (KRKRGRPPKNLLL). The disordered stretch occupies residues 578–604 (MPEVKKRRRRKQKLASPQPSYAADAND). Serine 593 carries the post-translational modification Phosphoserine. Lysine 606 is covalently cross-linked (Glycyl lysine isopeptide (Lys-Gly) (interchain with G-Cter in SUMO2)). The interval 714 to 789 (LTELGHPRKR…PGGQAGRNCG (76 aa)) is disordered. Residues 734–743 (KPKRKRRSRK) are compositionally biased toward basic residues. A phosphoserine mark is found at serine 825 and serine 842. Position 887 is an omega-N-methylarginine (arginine 887). Phosphoserine is present on serine 892. Residues 942-967 (KLAPPPSAVARSPTTHPPANTYPPQY) are disordered. Serine 1060 carries the phosphoserine modification. Disordered stretches follow at residues 1152-1191 (VSETFSESSSDSTQFSQPVGGGGFRRANSEASSSEGQSSL) and 1245-1306 (STSA…PDLG). 3 stretches are compositionally biased toward low complexity: residues 1153-1168 (SETFSESSSDSTQFSQ), 1180-1191 (SEASSSEGQSSL), and 1245-1264 (STSATASGYPSKRSTGPRQP). Serine 1180 carries the post-translational modification Phosphoserine. A phosphoserine mark is found at serine 1315, serine 1317, and serine 1392. Threonine 1394 is modified (phosphothreonine). Serine 1396 carries the phosphoserine modification. Lysine 1402 is covalently cross-linked (Glycyl lysine isopeptide (Lys-Gly) (interchain with G-Cter in SUMO2)). A disordered region spans residues 1495-1525 (HLASPPATPKADKEPLEMARPPGPPRGPAAA). 2 positions are modified to phosphoserine: serine 1498 and serine 1540.

The protein resides in the nucleus. Its subcellular location is the chromosome. Its function is as follows. Transcription factor required for the proper patterning of the epidermis, which plays a key role in early epithelial morphogenesis. Directly binds promoter and enhancer regions and acts by maintaining local enhancer-promoter chromatin architecture. Interacts with many sequence-specific zinc-finger transcription factors and methyl-CpG-binding proteins to regulate the expression of mesoderm genes that wire surface ectoderm stratification. This chain is Transcription factor Gibbin, found in Mus musculus (Mouse).